A 187-amino-acid polypeptide reads, in one-letter code: GTP cyclohydrolase 1 (187 aa).

Residues Cys-79, His-82, and Cys-150 each contribute to the Zn(2+) site.

It belongs to the GTP cyclohydrolase I family. As to quaternary structure, toroid-shaped homodecamer, composed of two pentamers of five dimers.

It carries out the reaction GTP + H2O = 7,8-dihydroneopterin 3'-triphosphate + formate + H(+). It functions in the pathway cofactor biosynthesis; 7,8-dihydroneopterin triphosphate biosynthesis; 7,8-dihydroneopterin triphosphate from GTP: step 1/1. This Fusobacterium nucleatum subsp. nucleatum (strain ATCC 25586 / DSM 15643 / BCRC 10681 / CIP 101130 / JCM 8532 / KCTC 2640 / LMG 13131 / VPI 4355) protein is GTP cyclohydrolase 1.